We begin with the raw amino-acid sequence, 240 residues long: MNQASFFVADKAIFGGYPSWEQVQELQTAGVVWFVDLTEECEKNVVLYHQLVPNWINYPIKDGGTPQNREKFLTFLLAVQILVDGLGPGEKIYLHCRGGHGRSGLVIACFLAMTLNISPKKSLFLVKLYHSQRPNLVNTRWEREWPLNPTQKRFVQKFFGTFLLRSGFEAENTSAYKKSDHVWYFVRINVWLHQNPQLLAVVLNSGLKTIKGEGPVSKILQQLRYYILFSKAKKLVDCCS.

One can recognise a Tyrosine-protein phosphatase domain in the interval 3-151 (QASFFVADKA…EREWPLNPTQ (149 aa)). The active-site Phosphocysteine intermediate is C96.

This sequence belongs to the protein-tyrosine phosphatase family.

It carries out the reaction O-phospho-L-tyrosyl-[protein] + H2O = L-tyrosyl-[protein] + phosphate. This is Putative tyrosine phosphatase 067L from Aedes vexans (Inland floodwater mosquito).